The primary structure comprises 809 residues: Phenylalanine--tRNA ligase beta subunit (809 aa).

Positions 39 to 152 constitute a tRNA-binding domain; it reads KDKWPNVYVG…ADAPVGMLAS (114 aa). Positions 404-492 constitute a B5 domain; it reads KDRNSVVLSL…RIAGYDTIPC (89 aa). Positions 470, 476, 479, and 480 each coordinate Mg(2+). Residues 717–808 enclose the FDX-ACB domain; sequence NRFPSVERDL…LNTETGAVLR (92 aa).

It belongs to the phenylalanyl-tRNA synthetase beta subunit family. Type 1 subfamily. Tetramer of two alpha and two beta subunits. Mg(2+) serves as cofactor.

It is found in the cytoplasm. It carries out the reaction tRNA(Phe) + L-phenylalanine + ATP = L-phenylalanyl-tRNA(Phe) + AMP + diphosphate + H(+). This Dehalococcoides mccartyi (strain ATCC BAA-2266 / KCTC 15142 / 195) (Dehalococcoides ethenogenes (strain 195)) protein is Phenylalanine--tRNA ligase beta subunit.